Consider the following 330-residue polypeptide: 4-hydroxythreonine-4-phosphate dehydrogenase (330 aa).

Thr133 is a substrate binding site. 3 residues coordinate a divalent metal cation: His161, His206, and His261. Residues Lys269, Asn278, and Arg287 each coordinate substrate.

The protein belongs to the PdxA family. As to quaternary structure, homodimer. Requires Zn(2+) as cofactor. Mg(2+) serves as cofactor. It depends on Co(2+) as a cofactor.

The protein localises to the cytoplasm. The enzyme catalyses 4-(phosphooxy)-L-threonine + NAD(+) = 3-amino-2-oxopropyl phosphate + CO2 + NADH. The protein operates within cofactor biosynthesis; pyridoxine 5'-phosphate biosynthesis; pyridoxine 5'-phosphate from D-erythrose 4-phosphate: step 4/5. Functionally, catalyzes the NAD(P)-dependent oxidation of 4-(phosphooxy)-L-threonine (HTP) into 2-amino-3-oxo-4-(phosphooxy)butyric acid which spontaneously decarboxylates to form 3-amino-2-oxopropyl phosphate (AHAP). In Xylella fastidiosa (strain 9a5c), this protein is 4-hydroxythreonine-4-phosphate dehydrogenase.